Here is a 100-residue protein sequence, read N- to C-terminus: Urease subunit gamma (100 aa).

The protein belongs to the urease gamma subunit family. Heterotrimer of UreA (gamma), UreB (beta) and UreC (alpha) subunits. Three heterotrimers associate to form the active enzyme.

The protein localises to the cytoplasm. It catalyses the reaction urea + 2 H2O + H(+) = hydrogencarbonate + 2 NH4(+). It functions in the pathway nitrogen metabolism; urea degradation; CO(2) and NH(3) from urea (urease route): step 1/1. In Trichormus variabilis (strain ATCC 29413 / PCC 7937) (Anabaena variabilis), this protein is Urease subunit gamma.